A 191-amino-acid chain; its full sequence is MSEKKNKKERLADEIEQEELNILDESEETVEEEATADALTEEQAKILELENKLDEVENRYLRMQADFENVKKRHIADRDASQKYRSQSLAEDLLPALDSFEKALATTSDQEEVKQILKGMEMVYNQILVAFEKEGIEVIPAVGEQFDPNFHQAVMQDSDENAASNEITAELQKGYKLKDRVIRPSMVKVNQ.

This sequence belongs to the GrpE family. As to quaternary structure, homodimer.

Its subcellular location is the cytoplasm. Functionally, participates actively in the response to hyperosmotic and heat shock by preventing the aggregation of stress-denatured proteins, in association with DnaK and GrpE. It is the nucleotide exchange factor for DnaK and may function as a thermosensor. Unfolded proteins bind initially to DnaJ; upon interaction with the DnaJ-bound protein, DnaK hydrolyzes its bound ATP, resulting in the formation of a stable complex. GrpE releases ADP from DnaK; ATP binding to DnaK triggers the release of the substrate protein, thus completing the reaction cycle. Several rounds of ATP-dependent interactions between DnaJ, DnaK and GrpE are required for fully efficient folding. The polypeptide is Protein GrpE (Listeria welshimeri serovar 6b (strain ATCC 35897 / DSM 20650 / CCUG 15529 / CIP 8149 / NCTC 11857 / SLCC 5334 / V8)).